A 493-amino-acid chain; its full sequence is Xylulose kinase (493 aa).

84-85 (QH) is a binding site for substrate. Asp247 serves as the catalytic Proton acceptor.

The protein belongs to the FGGY kinase family.

It carries out the reaction D-xylulose + ATP = D-xylulose 5-phosphate + ADP + H(+). Functionally, catalyzes the phosphorylation of D-xylulose to D-xylulose 5-phosphate. The sequence is that of Xylulose kinase from Haemophilus influenzae (strain ATCC 51907 / DSM 11121 / KW20 / Rd).